Here is a 557-residue protein sequence, read N- to C-terminus: Hyaluronan synthase 3 (557 aa).

The Cytoplasmic segment spans residues 1 to 10 (MPGKFQTGLR). A helical transmembrane segment spans residues 11–31 (VLATCLFALLVLGGILVAYVT). The Extracellular segment spans residues 32–44 (GYQFIHTDRHHLS). The helical transmembrane segment at 45–65 (FGLYGAILGLHLLSQSLFAFL) threads the bilayer. The Cytoplasmic portion of the chain corresponds to 66–367 (EHRKMRGGGR…NALWFHKHHL (302 aa)). A helical membrane pass occupies residues 368-388 (WMTYESVVTGFFPFFLVATVV). Topologically, residues 389–398 (QLFYRGRVWN) are extracellular. A helical membrane pass occupies residues 399-419 (ILLFLLTVQLVGILKATYACI). Residues 420 to 430 (LRGNAEMIFMS) lie on the Cytoplasmic side of the membrane. Residues 431–451 (LYSLLYMTSLLPAKIFAVITI) traverse the membrane as a helical segment. The Extracellular segment spans residues 452-463 (KKSGWGTSGRRK). A helical transmembrane segment spans residues 464-484 (LVVNFMGMVPVSVWFCILLGG). Residues 485-501 (LVYTAYCQSHDPFTETE) lie on the Cytoplasmic side of the membrane. Residues 502–522 (LLFLLTGAILYGCYWVALLSL) form a helical membrane-spanning segment. The Extracellular segment spans residues 523 to 557 (YLALIARRCGKRQELYNLALEEVSEPEPAAKAIKP).

It belongs to the NodC/HAS family. Requires Mg(2+) as cofactor. O-GlcNAcylation increases the hyaluronan synthase activity, HAS3 stability and its plasma membrane residence. The concentration of UDP-GlcNAc controls the level of O-GlcNAc modification.

It is found in the cell membrane. The protein resides in the golgi apparatus membrane. It localises to the golgi apparatus. Its subcellular location is the trans-Golgi network membrane. The protein localises to the cytoplasmic vesicle. The catalysed reaction is [hyaluronan](n) + UDP-N-acetyl-alpha-D-glucosamine = N-acetyl-beta-D-glucosaminyl-(1-&gt;4)-[hyaluronan](n) + UDP + H(+). The enzyme catalyses N-acetyl-beta-D-glucosaminyl-(1-&gt;4)-[hyaluronan](n) + UDP-alpha-D-glucuronate = [hyaluronan](n+1) + UDP + H(+). It functions in the pathway glycan biosynthesis; hyaluronan biosynthesis. Functionally, catalyzes the addition of GlcNAc or GlcUA monosaccharides to the nascent hyaluronan polymer. Therefore, it is essential to hyaluronan synthesis a major component of most extracellular matrices that has a structural role in tissues architectures and regulates cell adhesion, migration and differentiation. This is one of three isoenzymes responsible for cellular hyaluronan synthesis. This is Hyaluronan synthase 3 (has3) from Xenopus laevis (African clawed frog).